A 403-amino-acid polypeptide reads, in one-letter code: Tryptophan synthase beta chain (403 aa).

Position 90 is an N6-(pyridoxal phosphate)lysine (Lys-90).

This sequence belongs to the TrpB family. In terms of assembly, tetramer of two alpha and two beta chains. The cofactor is pyridoxal 5'-phosphate.

The catalysed reaction is (1S,2R)-1-C-(indol-3-yl)glycerol 3-phosphate + L-serine = D-glyceraldehyde 3-phosphate + L-tryptophan + H2O. The protein operates within amino-acid biosynthesis; L-tryptophan biosynthesis; L-tryptophan from chorismate: step 5/5. Functionally, the beta subunit is responsible for the synthesis of L-tryptophan from indole and L-serine. This Leifsonia xyli subsp. xyli (strain CTCB07) protein is Tryptophan synthase beta chain.